The sequence spans 460 residues: V-type ATP synthase beta chain (460 aa).

The protein belongs to the ATPase alpha/beta chains family.

Its function is as follows. Produces ATP from ADP in the presence of a proton gradient across the membrane. The V-type beta chain is a regulatory subunit. The sequence is that of V-type ATP synthase beta chain from Thermotoga neapolitana (strain ATCC 49049 / DSM 4359 / NBRC 107923 / NS-E).